A 216-amino-acid chain; its full sequence is MNIQLSPLEARVIGCLIEKEVTTPDHYPLTLNSLTTACNQKSNREPVLNLSEAEVQDTVEGLIARRLVSDESSFNSRTSKYQHRFCNTEFGDLKLNQQELGLICCLLLRGAQTPGELRTRTNRLCTFTDVKETEAVLERLANRDSGALVVKLPREPGKRESRYHHLFCGEVDMAAFATSSDNEANASSQYAELEQEVAALREEVAELRALIERHLG.

Belongs to the UPF0502 family.

The protein is UPF0502 protein VC0395_0676/VC395_A0574 of Vibrio cholerae serotype O1 (strain ATCC 39541 / Classical Ogawa 395 / O395).